Consider the following 383-residue polypeptide: Chaperone protein DnaJ (383 aa).

The region spanning 5–69 (DYYDILGVSK…QKRAQYDQFG (65 aa)) is the J domain. The segment at 138-222 (GKTTTIKYDR…CHGAGHVHER (85 aa)) adopts a CR-type zinc-finger fold. Positions 151, 154, 168, 171, 194, 197, 210, and 213 each coordinate Zn(2+). 4 CXXCXGXG motif repeats span residues 151-158 (CKTCHGTG), 168-175 (CPRCHGAG), 194-201 (CPECNGTG), and 210-217 (CDTCHGAG).

Belongs to the DnaJ family. In terms of assembly, homodimer. Zn(2+) is required as a cofactor.

It is found in the cytoplasm. Participates actively in the response to hyperosmotic and heat shock by preventing the aggregation of stress-denatured proteins and by disaggregating proteins, also in an autonomous, DnaK-independent fashion. Unfolded proteins bind initially to DnaJ; upon interaction with the DnaJ-bound protein, DnaK hydrolyzes its bound ATP, resulting in the formation of a stable complex. GrpE releases ADP from DnaK; ATP binding to DnaK triggers the release of the substrate protein, thus completing the reaction cycle. Several rounds of ATP-dependent interactions between DnaJ, DnaK and GrpE are required for fully efficient folding. Also involved, together with DnaK and GrpE, in the DNA replication of plasmids through activation of initiation proteins. In Limosilactobacillus reuteri (strain DSM 20016) (Lactobacillus reuteri), this protein is Chaperone protein DnaJ.